The following is an 801-amino-acid chain: Phenylalanine--tRNA ligase beta subunit (801 aa).

The 115-residue stretch at 39 to 153 (AEGLSKLVVG…EGAIPGDSIF (115 aa)) folds into the tRNA-binding domain. In terms of domain architecture, B5 spans 406–481 (TEPVEVSTTL…RIYGYEKLPT (76 aa)). Mg(2+) contacts are provided by Asp459, Asp465, Glu468, and Glu469. In terms of domain architecture, FDX-ACB spans 708-801 (TKYPSVSRDI…LVEKVNAEIR (94 aa)).

This sequence belongs to the phenylalanyl-tRNA synthetase beta subunit family. Type 1 subfamily. As to quaternary structure, tetramer of two alpha and two beta subunits. Requires Mg(2+) as cofactor.

The protein localises to the cytoplasm. It carries out the reaction tRNA(Phe) + L-phenylalanine + ATP = L-phenylalanyl-tRNA(Phe) + AMP + diphosphate + H(+). The polypeptide is Phenylalanine--tRNA ligase beta subunit (Streptococcus agalactiae serotype V (strain ATCC BAA-611 / 2603 V/R)).